We begin with the raw amino-acid sequence, 138 residues long: MSGTLLAFDFGTKSIGVAIGQRITGTARPLPAIKAQDGTPDWTLIERLLKEWQPDEIIVGLPLNMDGTEQPLTARARKFANRIHGRFGVTVTLHDERLSTVEARSGLFERGGYRALNKGKVDSASAVIILESYFEQGY.

The protein belongs to the YqgF nuclease family.

The protein localises to the cytoplasm. In terms of biological role, could be a nuclease involved in processing of the 5'-end of pre-16S rRNA. This is Putative pre-16S rRNA nuclease from Salmonella typhimurium (strain LT2 / SGSC1412 / ATCC 700720).